We begin with the raw amino-acid sequence, 150 residues long: Submaxillary gland androgen-regulated protein 2, isoform alpha (150 aa).

The first 22 residues, 1–22, serve as a signal peptide directing secretion; that stretch reads MKALYMVFVLWVLIGCFLSGEC.

It localises to the secreted. Functionally, may play a role in protection or detoxification. This chain is Submaxillary gland androgen-regulated protein 2, isoform alpha (Smr2), found in Mus musculus (Mouse).